Consider the following 122-residue polypeptide: Biogenesis of lysosome-related organelles complex 1 subunit CNL1 (122 aa).

Residues 1-10 (MQDNSSHSRE) are compositionally biased toward basic and acidic residues. Positions 1–21 (MQDNSSHSRESASAGDDPLGI) are disordered. Positions 63–95 (ENTIDKNIAKFKELLEKCDTLENHYEMLNQLAI) form a coiled coil.

This sequence belongs to the BLOC1S4 family. Component of the biogenesis of lysosome-related organelles complex-1 (BLOC-1) composed of at least BLI1, BLS1, CNL1, KXD1, SNN1 and VAB2.

It is found in the cytoplasm. Functionally, component of the biogenesis of lysosome-related organelles complex-1 (BLOC-1), a complex that is involved in endosomal cargo sorting. The sequence is that of Biogenesis of lysosome-related organelles complex 1 subunit CNL1 (CLN1) from Saccharomyces cerevisiae (strain Lalvin QA23) (Baker's yeast).